We begin with the raw amino-acid sequence, 62 residues long: UPF0434 protein RHE_CH03977 (62 aa).

It belongs to the UPF0434 family.

The sequence is that of UPF0434 protein RHE_CH03977 from Rhizobium etli (strain ATCC 51251 / DSM 11541 / JCM 21823 / NBRC 15573 / CFN 42).